Consider the following 550-residue polypeptide: DNA-directed RNA polymerase subunit alpha (550 aa).

Residues 1 to 333 are alpha N-terminal domain (alpha-NTD); sequence MTIYPNLKKI…QENNLFRSEK (333 aa). The insert stretch occupies residues 185-258; sequence TTLKKRNILL…TSLGHDTVSN (74 aa). The segment at 378–550 is alpha C-terminal domain (alpha-CTD); that stretch reads FLNQSLGQNK…SLTFEYARKF (173 aa).

Belongs to the RNA polymerase alpha chain family. As to quaternary structure, in plastids the minimal PEP RNA polymerase catalytic core is composed of four subunits: alpha, beta, beta', and beta''. When a (nuclear-encoded) sigma factor is associated with the core the holoenzyme is formed, which can initiate transcription.

Its subcellular location is the plastid. It localises to the chloroplast. It catalyses the reaction RNA(n) + a ribonucleoside 5'-triphosphate = RNA(n+1) + diphosphate. DNA-dependent RNA polymerase catalyzes the transcription of DNA into RNA using the four ribonucleoside triphosphates as substrates. The sequence is that of DNA-directed RNA polymerase subunit alpha (rpoA) from Chlamydomonas reinhardtii (Chlamydomonas smithii).